Consider the following 838-residue polypeptide: Transforming acidic coiled-coil-containing protein 3 (838 aa).

Ser2 bears the N-acetylserine mark. Phosphoserine is present on residues Ser25, Ser39, and Ser71. Residues 123-227 form a disordered region; it reads EADTDLLGDA…HGAEEECKAE (105 aa). A compositionally biased stretch (low complexity) spans 132-164; sequence ASPAFGSGSSSESGPGALADLDCSSSSQSPGSS. Ser175 and Ser177 each carry phosphoserine. Basic and acidic residues predominate over residues 204–227; it reads DPCRTESQHKAETPHGAEEECKAE. Ser250, Ser317, and Ser402 each carry phosphoserine. Residues 311–527 form a disordered region; that stretch reads GRAMTLSPQE…LELKEESFRD (217 aa). The segment covering 403 to 412 has biased composition (basic and acidic residues); sequence YHLDWDKMDD. Phosphoserine is present on Ser434. Polar residues predominate over residues 492–503; sequence NSASTSLPTSCP. The necessary but not sufficient for spindle localization stretch occupies residues 522-577; the sequence is EESFRDPAEVLGTGAEVDYLEQFGTSSFKESALRKQSLYLKFDPLLRDSPGRPVPV. Ser558 carries the phosphoserine; by AURKA modification. Residues 569-594 are disordered; sequence DSPGRPVPVATETSSMHGANETPSGR. The segment covering 579 to 591 has biased composition (polar residues); that stretch reads TETSSMHGANETP. The necessary but not sufficient for spindle localization stretch occupies residues 594 to 838; it reads RPREAKLVEF…DDLISKMEKI (245 aa). Residues 637–837 adopt a coiled-coil conformation; sequence LQYSQKDLDA…CDDLISKMEK (201 aa).

This sequence belongs to the TACC family. As to quaternary structure, interacts with microtubules. Interacts with CKAP5 independently of clathrin. Interacts with CKAP5 and clathrin forming the TACC3/ch-TOG/clathrin complex located at spindle inter-microtubules bridges; TACC3 (phosphorylated at Ser-558 by AURKA) and CLTC are proposed to form a composite microtubule interaction surface. Interacts with CCDC100/CEP120. The coiled coil C-terminal region interacts with AH receptor nuclear translocator protein (ARNT) and ARNT2. Interacts with GCN5L2 and PCAF.

The protein resides in the cytoplasm. Its subcellular location is the cytoskeleton. The protein localises to the microtubule organizing center. It localises to the centrosome. It is found in the spindle. The protein resides in the spindle pole. Functionally, plays a role in the microtubule-dependent coupling of the nucleus and the centrosome. Involved in the processes that regulate centrosome-mediated interkinetic nuclear migration (INM) of neural progenitors. Acts as a component of the TACC3/ch-TOG/clathrin complex proposed to contribute to stabilization of kinetochore fibers of the mitotic spindle by acting as inter-microtubule bridge. The TACC3/ch-TOG/clathrin complex is required for the maintenance of kinetochore fiber tension. May be involved in the control of cell growth and differentiation. May contribute to cancer. The protein is Transforming acidic coiled-coil-containing protein 3 (TACC3) of Homo sapiens (Human).